Consider the following 340-residue polypeptide: L-threonine 3-dehydrogenase (340 aa).

C38 is a binding site for Zn(2+). Active-site charge relay system residues include T40 and H43. Zn(2+) is bound by residues H63, E64, C93, C96, C99, and C107. NAD(+) is bound by residues I175, D195, R200, 261–263 (LGI), and 285–286 (IY).

It belongs to the zinc-containing alcohol dehydrogenase family. In terms of assembly, homotetramer. Zn(2+) is required as a cofactor.

Its subcellular location is the cytoplasm. It catalyses the reaction L-threonine + NAD(+) = (2S)-2-amino-3-oxobutanoate + NADH + H(+). The protein operates within amino-acid degradation; L-threonine degradation via oxydo-reductase pathway; glycine from L-threonine: step 1/2. Catalyzes the NAD(+)-dependent oxidation of L-threonine to 2-amino-3-ketobutyrate. This Xanthomonas oryzae pv. oryzae (strain MAFF 311018) protein is L-threonine 3-dehydrogenase.